The chain runs to 113 residues: U11-theraphotoxin-Hhn1a (113 aa).

The N-terminal stretch at 1–21 (MNTVRVTFLLVFVLAVSLGQA) is a signal peptide. Residues 22-74 (DKDENRMEMQEKAEQGKSYLDFAENLLLQKLEELEAKLLEEDSEESRNSRQKR) constitute a propeptide that is removed on maturation. 3 disulfides stabilise this stretch: Cys75-Cys90, Cys82-Cys95, and Cys89-Cys110.

Belongs to the neurotoxin 14 (magi-1) family. 01 (HNTX-16) subfamily. Expressed by the venom gland.

It is found in the secreted. Functionally, probable ion channel inhibitor. This is U11-theraphotoxin-Hhn1a from Cyriopagopus hainanus (Chinese bird spider).